A 196-amino-acid polypeptide reads, in one-letter code: Peroxynitrite isomerase (196 aa).

A disordered region spans residues 1 to 29; that stretch reads MSDENPLQPPWLNAPPVDPYPYEESHDLR. The span at 7–19 shows a compositional bias: pro residues; it reads LQPPWLNAPPVDP. The short motif at 46–52 is the GXWXGXG element; that stretch reads GVWRGRG. A heme b-binding site is contributed by His186.

The protein belongs to the nitrobindin family. In terms of assembly, homodimer. The cofactor is heme b.

The catalysed reaction is peroxynitrite = nitrate. It functions in the pathway nitrogen metabolism. Its function is as follows. Heme-binding protein able to scavenge peroxynitrite and to protect free L-tyrosine against peroxynitrite-mediated nitration, by acting as a peroxynitrite isomerase that converts peroxynitrite to nitrate. Therefore, this protein likely plays a role in peroxynitrite sensing and in the detoxification of reactive nitrogen and oxygen species (RNS and ROS, respectively). Is able to bind nitric oxide (NO) in vitro, but may act as a sensor of peroxynitrite levels in vivo. This chain is Peroxynitrite isomerase, found in Salinispora arenicola (strain CNS-205).